Reading from the N-terminus, the 337-residue chain is Heme A synthase (337 aa).

The next 5 membrane-spanning stretches (helical) occupy residues 6-26, 87-107, 119-139, 154-174, and 192-212; these read ITKW…IGGI, FIHR…VIYF, LPYI…WYMV, LAFH…QLIK, and LIFS…GALV. Residue H256 coordinates heme. Helical transmembrane passes span 258-278, 285-305, and 308-328; these read LVGY…LKIE, IAYF…ITLL, and VPII…SVII. H316 is a binding site for heme.

Belongs to the COX15/CtaA family. Type 2 subfamily. Interacts with CtaB. The cofactor is heme b.

It localises to the cell membrane. The catalysed reaction is Fe(II)-heme o + 2 A + H2O = Fe(II)-heme a + 2 AH2. Its pathway is porphyrin-containing compound metabolism; heme A biosynthesis; heme A from heme O: step 1/1. Functionally, catalyzes the conversion of heme O to heme A by two successive hydroxylations of the methyl group at C8. The first hydroxylation forms heme I, the second hydroxylation results in an unstable dihydroxymethyl group, which spontaneously dehydrates, resulting in the formyl group of heme A. This Rickettsia rickettsii (strain Iowa) protein is Heme A synthase.